The sequence spans 319 residues: L-lactate dehydrogenase 2 (319 aa).

NAD(+) contacts are provided by residues valine 16, aspartate 37, lysine 42, tyrosine 68, and 82-83 (GA). Residues glutamine 85 and arginine 91 each contribute to the substrate site. NAD(+) contacts are provided by residues serine 104, 121 to 123 (AAN), and serine 146. 123-126 (NPVD) is a binding site for substrate. 151 to 154 (DSAR) is a binding site for substrate. Catalysis depends on histidine 178, which acts as the Proton acceptor. Tyrosine 222 bears the Phosphotyrosine mark. Position 231 (threonine 231) interacts with substrate.

Belongs to the LDH/MDH superfamily. LDH family. In terms of assembly, homotetramer.

Its subcellular location is the cytoplasm. It carries out the reaction (S)-lactate + NAD(+) = pyruvate + NADH + H(+). It functions in the pathway fermentation; pyruvate fermentation to lactate; (S)-lactate from pyruvate: step 1/1. Catalyzes the conversion of lactate to pyruvate (Potential). Contributes to S.aureus growth during nitrosative stress in both aerobically and anaerobically cultured cells, despite playing a secondary role in this resistance mechanism. The protein is L-lactate dehydrogenase 2 of Staphylococcus aureus (strain Mu3 / ATCC 700698).